Reading from the N-terminus, the 808-residue chain is Auxin response factor 4 (808 aa).

Positions 1–13 (MPPAAMAPPPPPQ) are enriched in pro residues. Residues 1–20 (MPPAAMAPPPPPQGSSTGDP) form a disordered region. Positions 129–231 (FCKTLTASDT…ELRVGVRRAM (103 aa)) form a DNA-binding region, TF-B3. Basic and acidic residues predominate over residues 342–352 (PSTIPRPDRVS). Disordered stretches follow at residues 342–433 (PSTI…DSDV), 661–691 (TAGT…VAST), and 778–808 (QKMN…KSDN). Over residues 402-432 (AQAQRSQNSTVLQGQEQMTLRSNLTESNDSD) the composition is skewed to polar residues. Residues 692-785 (RSCTKVHKQG…EVQKMNSKSN (94 aa)) form the PB1 domain. Positions 787–799 (PRKDDSSENEKGH) are enriched in basic and acidic residues.

The protein belongs to the ARF family. In terms of assembly, homodimers and heterodimers. In terms of tissue distribution, expressed in roots, culms, leaves and young panicles.

It localises to the nucleus. Its function is as follows. Auxin response factors (ARFs) are transcriptional factors that bind specifically to the DNA sequence 5'-TGTCTC-3' found in the auxin-responsive promoter elements (AuxREs). This is Auxin response factor 4 (ARF4) from Oryza sativa subsp. japonica (Rice).